The chain runs to 295 residues: Multistep phosphorelay regulator 1 (295 aa).

Positions 89–110 (KSENNQQLAANETAGAPEGTEE) are disordered. Residues 97–106 (AANETAGAPE) are compositionally biased toward low complexity. Residues 182-284 (EHEFSKSIVW…NDFYKDARAY (103 aa)) enclose the HPt domain. The residue at position 221 (histidine 221) is a Phosphohistidine.

Functionally, binds to the msc4 response regulator which is part of a multistep phosphorelay system that transmits oxidative stress signals to the spc1 MAPK cascade. The sequence is that of Multistep phosphorelay regulator 1 (mpr1) from Schizosaccharomyces pombe (strain 972 / ATCC 24843) (Fission yeast).